A 270-amino-acid polypeptide reads, in one-letter code: Urease accessory protein UreD (270 aa).

It belongs to the UreD family. UreD, UreF and UreG form a complex that acts as a GTP-hydrolysis-dependent molecular chaperone, activating the urease apoprotein by helping to assemble the nickel containing metallocenter of UreC. The UreE protein probably delivers the nickel.

Its subcellular location is the cytoplasm. Its function is as follows. Required for maturation of urease via the functional incorporation of the urease nickel metallocenter. In Actinobacillus pleuropneumoniae serotype 3 (strain JL03), this protein is Urease accessory protein UreD.